We begin with the raw amino-acid sequence, 334 residues long: Fructose-1,6-bisphosphatase class 1 2 (334 aa).

Mg(2+)-binding residues include Glu92, Asp114, Leu116, and Asp117. Residues 117 to 120, Asn208, and Lys274 contribute to the substrate site; that span reads DGSS. Glu280 is a Mg(2+) binding site.

Belongs to the FBPase class 1 family. As to quaternary structure, homotetramer. Mg(2+) serves as cofactor.

It localises to the cytoplasm. The enzyme catalyses beta-D-fructose 1,6-bisphosphate + H2O = beta-D-fructose 6-phosphate + phosphate. Its pathway is carbohydrate biosynthesis; gluconeogenesis. The sequence is that of Fructose-1,6-bisphosphatase class 1 2 from Albidiferax ferrireducens (strain ATCC BAA-621 / DSM 15236 / T118) (Rhodoferax ferrireducens).